A 293-amino-acid polypeptide reads, in one-letter code: ATP synthase gamma chain (293 aa).

This sequence belongs to the ATPase gamma chain family. As to quaternary structure, F-type ATPases have 2 components, CF(1) - the catalytic core - and CF(0) - the membrane proton channel. CF(1) has five subunits: alpha(3), beta(3), gamma(1), delta(1), epsilon(1). CF(0) has three main subunits: a, b and c.

It localises to the cell membrane. In terms of biological role, produces ATP from ADP in the presence of a proton gradient across the membrane. The gamma chain is believed to be important in regulating ATPase activity and the flow of protons through the CF(0) complex. The polypeptide is ATP synthase gamma chain (Streptococcus agalactiae serotype Ia (strain ATCC 27591 / A909 / CDC SS700)).